A 224-amino-acid chain; its full sequence is LexA repressor (224 aa).

The H-T-H motif DNA-binding region spans Met-41–Asn-61. Catalysis depends on for autocatalytic cleavage activity residues Ser-148 and Lys-185.

It belongs to the peptidase S24 family. As to quaternary structure, homodimer.

It catalyses the reaction Hydrolysis of Ala-|-Gly bond in repressor LexA.. Functionally, represses a number of genes involved in the response to DNA damage (SOS response), including recA and lexA. In the presence of single-stranded DNA, RecA interacts with LexA causing an autocatalytic cleavage which disrupts the DNA-binding part of LexA, leading to derepression of the SOS regulon and eventually DNA repair. The sequence is that of LexA repressor from Leifsonia xyli subsp. xyli (strain CTCB07).